The primary structure comprises 92 residues: Putative pterin-4-alpha-carbinolamine dehydratase (92 aa).

This sequence belongs to the pterin-4-alpha-carbinolamine dehydratase family.

It catalyses the reaction (4aS,6R)-4a-hydroxy-L-erythro-5,6,7,8-tetrahydrobiopterin = (6R)-L-erythro-6,7-dihydrobiopterin + H2O. In Picosynechococcus sp. (strain ATCC 27264 / PCC 7002 / PR-6) (Agmenellum quadruplicatum), this protein is Putative pterin-4-alpha-carbinolamine dehydratase.